The primary structure comprises 195 residues: Translation machinery-associated protein 22 (195 aa).

One can recognise an SUI1 domain in the interval 94 to 165; the sequence is VLIKRIERNR…EAKEYIEKLL (72 aa). The interval 176 to 195 is disordered; it reads EQVDEKKKKKATAPGATPAA.

It belongs to the DENR family. In terms of assembly, interacts with the 40S ribosomal subunit.

It is found in the cytoplasm. The sequence is that of Translation machinery-associated protein 22 (TMA22) from Scheffersomyces stipitis (strain ATCC 58785 / CBS 6054 / NBRC 10063 / NRRL Y-11545) (Yeast).